The sequence spans 821 residues: High affinity potassium transporter (821 aa).

Polar residues predominate over residues 1 to 10 (MSDSQSNKQN). The segment at 1–47 (MSDSQSNKQNQGEDDNNVSSSIESNENYPFRLNDEESEPQSSTTESM) is disordered. The Cytoplasmic segment spans residues 1–57 (MSDSQSNKQNQGEDDNNVSSSIESNENYPFRLNDEESEPQSSTTESMLKAKKQSWRQ). Residues 17–27 (NVSSSIESNEN) are compositionally biased toward low complexity. Residues 58–78 (VLMLGFSSLGAIYGDIGTSPL) traverse the membrane as a helical segment. Residues 79–101 (YVLNSIKYPNSSPTEEDIYGAIS) are Extracellular-facing. A helical transmembrane segment spans residues 102-122 (IIFYLFTFIVIFKYILIVLFL). Residues 123-190 (GTNDGEGGQV…KASGFKTNPK (68 aa)) are Cytoplasmic-facing. Residues 191-211 (LIKFISKFILFGCFFGCSLVM) traverse the membrane as a helical segment. Over 212–238 (SDGLLTPTTSVLSAIAGIQIANPSFND) the chain is Extracellular. A helical membrane pass occupies residues 239-259 (VLAVSEVVLIVLFLIQQFGSN). Position 260 (Lys-260) is a topological domain, cytoplasmic. A helical membrane pass occupies residues 261 to 281 (ISFTFAPIIFLWLIGLIISGI). Topologically, residues 282–306 (YNIVKFHPAVFKSLSPYYAIQLLKH) are extracellular. A helical transmembrane segment spans residues 307 to 327 (SGIDVFSGAMLSITGTEAMFA). At 328–340 (DVGHFGRLPIQLT) the chain is on the cytoplasmic side. The chain crosses the membrane as a helical span at residues 341–361 (LTLFVYPALIICYLGQGAYII). The Extracellular portion of the chain corresponds to 362 to 386 (KHPEALSNPFFYSIPGGLNSWIYWV). Residues 387–407 (MFVLATLSTIIASQALILGVF) form a helical membrane-spanning segment. The Cytoplasmic portion of the chain corresponds to 408–434 (SITSQLINLDCFPNFKIIHVSKKYAGK). A helical membrane pass occupies residues 435–455 (VYIPAINWLLMIGVCATTAGF). The Extracellular portion of the chain corresponds to 456 to 463 (KNSNNVTA). N-linked (GlcNAc...) asparagine glycosylation occurs at Asn-460. A helical membrane pass occupies residues 464–484 (AYGLGITLDFLVTSSLIMVCM). The Cytoplasmic segment spans residues 485–491 (TYVYNWN). A helical transmembrane segment spans residues 492-512 (ILIPITYALIFLPLEVIMVIS). Topologically, residues 513–516 (NLKK) are extracellular. The chain crosses the membrane as a helical span at residues 517–537 (ITHGAWFPLMMSGIFMMFLSF). Residues 538-821 (WRWARSRKVN…KMFLGGVVRI (284 aa)) lie on the Cytoplasmic side of the membrane.

Belongs to the HAK/KUP transporter (TC 2.A.72) family.

It is found in the membrane. Functionally, major high-affinity potassium uptake protein. This Schwanniomyces occidentalis (Yeast) protein is High affinity potassium transporter (HAK1).